The primary structure comprises 1400 residues: Clustered mitochondria protein homolog (1400 aa).

Disordered stretches follow at residues 1–39, 56–78, and 212–243; these read MVSK…KEAS, GHDQ…QAED, and GDTG…KERP. A compositionally biased stretch (basic and acidic residues) spans 56-69; sequence GHDQAEEADSKQDG. The region spanning 380–622 is the Clu domain; that stretch reads RAEDAYTSRL…RTFPPDLNFL (243 aa). The tract at residues 684–741 is disordered; sequence AALQDSNAAGAGSENKPLALESCDGTPDSPTSSESTLTPEDSEATTVSENSSAENQEA. Low complexity predominate over residues 707-722; it reads DGTPDSPTSSESTLTP. Positions 727–741 are enriched in polar residues; sequence ATTVSENSSAENQEA. TPR repeat units lie at residues 1088 to 1121, 1130 to 1163, 1172 to 1205, and 1214 to 1247; these read AFHF…FNNV, CACL…SERV, IQEY…MLVV, and ALLD…NTKY. A compositionally biased stretch (polar residues) spans 1377 to 1388; sequence QDSGKIQEQQGS. The interval 1377–1400 is disordered; it reads QDSGKIQEQQGSHLELDDKLPVDD. The span at 1390–1400 shows a compositional bias: basic and acidic residues; it reads LELDDKLPVDD.

It belongs to the CLU family.

The protein localises to the cytoplasm. Its function is as follows. mRNA-binding protein involved in proper cytoplasmic distribution of mitochondria. In Danio rerio (Zebrafish), this protein is Clustered mitochondria protein homolog.